A 445-amino-acid polypeptide reads, in one-letter code: GTPase Der (445 aa).

EngA-type G domains are found at residues 3 to 167 and 180 to 353; these read PVIA…NLPD and IKLA…ASAN. GTP-binding positions include 9-16, 56-60, 119-122, 186-193, 233-237, and 298-301; these read GRPNVGKS, DTGGF, NKAE, DTAGL, and NKWD. The region spanning 354–438 is the KH-like domain; that stretch reads RKMSTPVLTR…PLRIQLKSSV (85 aa).

Belongs to the TRAFAC class TrmE-Era-EngA-EngB-Septin-like GTPase superfamily. EngA (Der) GTPase family. In terms of assembly, associates with the 50S ribosomal subunit.

Its function is as follows. GTPase that plays an essential role in the late steps of ribosome biogenesis. This Polaromonas naphthalenivorans (strain CJ2) protein is GTPase Der.